Reading from the N-terminus, the 211-residue chain is Germin-like protein subfamily 3 member 3 (211 aa).

The signal sequence occupies residues 1 to 20 (MKMIIQIFFIISLISTISFA). Residues Cys26 and Cys41 are joined by a disulfide bond. A Cupin type-1 domain is found at 55–201 (TGLGTAGNTS…TTFLSDAEVK (147 aa)). Asn62 is a glycosylation site (N-linked (GlcNAc...) asparagine). The Mn(2+) site is built by His103, His105, and Glu110. Ser140 carries the phosphoserine modification. Position 149 (His149) interacts with Mn(2+).

The protein belongs to the germin family. As to quaternary structure, oligomer (believed to be a pentamer but probably hexamer). As to expression, expressed in leaves and flowers.

The protein resides in the secreted. It is found in the extracellular space. The protein localises to the apoplast. In terms of biological role, may play a role in plant defense. Probably has no oxalate oxidase activity even if the active site is conserved. The polypeptide is Germin-like protein subfamily 3 member 3 (GER3) (Arabidopsis thaliana (Mouse-ear cress)).